A 645-amino-acid chain; its full sequence is UPF0313 protein CLM_0251 (645 aa).

One can recognise a Radical SAM core domain in the interval 295–566; sequence AIKEVKFSIT…RMQRALLQFS (272 aa). Cys-309, Cys-313, and Cys-316 together coordinate [4Fe-4S] cluster. A disordered region spans residues 598–645; the sequence is NKPYKKSHKKNNAKNNNNHYNKNNNYNKNKDISKKNKKNSLSKHKKRK. Residues 600–609 show a composition bias toward basic residues; that stretch reads PYKKSHKKNN. Residues 610-624 are compositionally biased toward low complexity; it reads AKNNNNHYNKNNNYN. Over residues 632–645 the composition is skewed to basic residues; it reads KNKKNSLSKHKKRK.

It belongs to the UPF0313 family. Requires [4Fe-4S] cluster as cofactor.

This is UPF0313 protein CLM_0251 from Clostridium botulinum (strain Kyoto / Type A2).